Consider the following 245-residue polypeptide: Probable membrane transporter protein YdhB (245 aa).

8 helical membrane-spanning segments follow: residues 1-21 (MLII…GAGG), 34-56 (HIPI…LSGA), 71-91 (LIVG…TSFI), 98-118 (YLTA…LFIL), 137-157 (ILGI…APFI), 177-197 (MLVI…EGFV), 199-219 (YVLL…GAKF), and 225-245 (KVVL…LLLF).

Belongs to the 4-toluene sulfonate uptake permease (TSUP) (TC 2.A.102) family.

The protein resides in the cell membrane. The sequence is that of Probable membrane transporter protein YdhB (ydhB) from Bacillus subtilis (strain 168).